The chain runs to 358 residues: tRNA-specific 2-thiouridylase MnmA (358 aa).

Residues 7–14 (AMSGGVDS) and Leu-33 contribute to the ATP site. Cys-101 serves as the catalytic Nucleophile. A disulfide bridge connects residues Cys-101 and Cys-197. Residue Gly-125 participates in ATP binding. The segment at 147–149 (KDQ) is interaction with tRNA. The active-site Cysteine persulfide intermediate is the Cys-197.

The protein belongs to the MnmA/TRMU family.

It localises to the cytoplasm. The enzyme catalyses S-sulfanyl-L-cysteinyl-[protein] + uridine(34) in tRNA + AH2 + ATP = 2-thiouridine(34) in tRNA + L-cysteinyl-[protein] + A + AMP + diphosphate + H(+). Its function is as follows. Catalyzes the 2-thiolation of uridine at the wobble position (U34) of tRNA, leading to the formation of s(2)U34. The polypeptide is tRNA-specific 2-thiouridylase MnmA (Rickettsia typhi (strain ATCC VR-144 / Wilmington)).